Reading from the N-terminus, the 704-residue chain is Preterpestacin I synthase tpcA (704 aa).

The interval 1–329 (MEQLSYQSKL…CSACPRQNAW (329 aa)) is terpene cyclase. Residue Asp-96 participates in Mg(2+) binding. Substrate is bound by residues Asp-96, Asn-231, 235–239 (SWERE), and 325–326 (RQ). The short motif at 96 to 100 (DDGGE) is the DDXXD 1 element. An NSE/DTE motif is present at residues 231 to 239 (NDYFSWERE). Residues 330-688 (KDMSSQSLNG…MLRLCLAKLS (359 aa)) form a prenyltransferase region. Positions 361 to 380 (KDSSFFGSQPSDDEPSLSEV) are disordered. Isopentenyl diphosphate contacts are provided by Lys-406, Arg-409, and His-438. Residues Asp-445 and Asp-449 each contribute to the Mg(2+) site. The DDXXD 2 motif lies at 445-449 (DDLED). Arg-454 provides a ligand contact to dimethylallyl diphosphate. Arg-455 contributes to the isopentenyl diphosphate binding site. Dimethylallyl diphosphate is bound by residues Lys-532, Thr-533, Gln-568, Asn-575, Lys-583, and Lys-593.

This sequence in the N-terminal section; belongs to the terpene synthase family. The protein in the C-terminal section; belongs to the FPP/GGPP synthase family. In terms of assembly, hexamer. Mg(2+) serves as cofactor.

The enzyme catalyses isopentenyl diphosphate + (2E,6E)-farnesyl diphosphate = (2E,6E,10E)-geranylgeranyl diphosphate + diphosphate. It carries out the reaction isopentenyl diphosphate + (2E,6E,10E)-geranylgeranyl diphosphate = (2E,6E,10E,14E)-geranylfarnesyl diphosphate + diphosphate. It participates in secondary metabolite biosynthesis; terpenoid biosynthesis. Functionally, bifunctional terpene synthase; part of the gene cluster that mediates the biosynthesis of terpestacin. The bifunctional terpene synthase tpcA converts isopentenyl diphosphate (IPP) and dimethylallyl diphosphate (DMAPP) into the sesterterpene preterpestacin I. The C-terminal prenyltransferase (PT) domain of tpcA catalyzes formation of GFPP, whereas the N-terminal terpene cyclase (TC) domain catalyzes the cyclization of GFPP into preterpestacin I. The cytochrome P450 monooxygenase tpcB then hydroxylates preterpestacin I to yield 24-hydroxypreterpstacin I (renamed as preterpestacin II) whereas the cytochrome P450 monooxygenase tpcC further hydroxylates preterpestacin II to yield 16,17-dihydroxypreterpestacin II (renamed as preterpestacin III). Finally, the FAD-dependent monooxygenase tpcD converts preterpestacin III into terpestacin. This Cochliobolus heterostrophus (strain C5 / ATCC 48332 / race O) (Southern corn leaf blight fungus) protein is Preterpestacin I synthase tpcA.